A 350-amino-acid chain; its full sequence is Eukaryotic translation initiation factor 3 subunit I (350 aa).

WD repeat units lie at residues 8 to 49, 51 to 89, 91 to 135, 149 to 188, 198 to 240, and 296 to 335; these read GHER…GTLE, HQGV…CVFT, ESPS…ESLT, QDGA…AVNS, EKNV…KVYK, and GHFG…FDFY.

The protein belongs to the eIF-3 subunit I family. As to quaternary structure, component of the eukaryotic translation initiation factor 3 (eIF-3) complex.

The protein localises to the cytoplasm. In terms of biological role, component of the eukaryotic translation initiation factor 3 (eIF-3) complex, which is involved in protein synthesis of a specialized repertoire of mRNAs and, together with other initiation factors, stimulates binding of mRNA and methionyl-tRNAi to the 40S ribosome. The eIF-3 complex specifically targets and initiates translation of a subset of mRNAs involved in cell proliferation. The sequence is that of Eukaryotic translation initiation factor 3 subunit I from Scheffersomyces stipitis (strain ATCC 58785 / CBS 6054 / NBRC 10063 / NRRL Y-11545) (Yeast).